Here is a 429-residue protein sequence, read N- to C-terminus: Glucan 1,3-beta-glucosidase (429 aa).

An N-terminal signal peptide occupies residues 1–19 (MLSMQVVSLISLLVSVCLA). The propeptide occupies 20-27 (QPLPLSKR). Residue Glu-215 is the Proton donor of the active site. Disulfide bonds link Cys-299/Cys-425 and Cys-324/Cys-354. The Nucleophile role is filled by Glu-316.

It belongs to the glycosyl hydrolase 5 (cellulase A) family.

It is found in the secreted. The catalysed reaction is Successive hydrolysis of beta-D-glucose units from the non-reducing ends of (1-&gt;3)-beta-D-glucans, releasing alpha-glucose.. In terms of biological role, beta-glucanases participate in the metabolism of beta-glucan, the main structural component of the cell wall. It could also function biosynthetically as a transglycosylase. This Kluyveromyces lactis (strain ATCC 8585 / CBS 2359 / DSM 70799 / NBRC 1267 / NRRL Y-1140 / WM37) (Yeast) protein is Glucan 1,3-beta-glucosidase.